A 408-amino-acid polypeptide reads, in one-letter code: UDP-N-acetylglucosamine--dolichyl-phosphate N-acetylglucosaminephosphotransferase (408 aa).

2 helical membrane-spanning segments follow: residues 6-26 (SLLG…IYLP) and 32-52 (WIIV…YKLI). UDP-N-acetyl-alpha-D-glucosamine is bound by residues aspartate 68 and glutamate 84. A run of 2 helical transmembrane segments spans residues 87–107 (GICV…FQWF) and 120–140 (AALT…VLNL). Residue lysine 145 coordinates dolichyl phosphate. Helical transmembrane passes span 147–167 (ILPM…TTVV) and 181–201 (LGVV…LAIF). Residue 200 to 208 (IFCTNSINI) coordinates dolichyl phosphate. Asparagine 207 provides a ligand contact to Mg(2+). Asparagine 213 lines the UDP-N-acetyl-alpha-D-glucosamine pocket. Transmembrane regions (helical) follow at residues 221–241 (VVIA…ASSV) and 258–278 (HLFS…LLFY). Residue aspartate 289 coordinates Mg(2+). Residues 297–317 (MCFAVVAILCHFSKTLLLFFI) traverse the membrane as a helical segment. 338 to 340 (RHR) is a binding site for UDP-N-acetyl-alpha-D-glucosamine. The next 2 helical transmembrane spans lie at 351–371 (MEAI…TGPL) and 376–396 (LCVY…GIRY).

It belongs to the glycosyltransferase 4 family. In terms of assembly, homodimer. The cofactor is Mg(2+).

The protein resides in the endoplasmic reticulum membrane. It catalyses the reaction a di-trans,poly-cis-dolichyl phosphate + UDP-N-acetyl-alpha-D-glucosamine = an N-acetyl-alpha-D-glucosaminyl-diphospho-di-trans,poly-cis-dolichol + UMP. It functions in the pathway protein modification; protein glycosylation. With respect to regulation, inhibited by natural nucleoside antibiotic tunicamycin, which acts as a structural analog and competitor of UDP-GlcNAc. In terms of biological role, UDP-N-acetylglucosamine--dolichyl-phosphate N-acetylglucosaminephosphotransferase that operates in the biosynthetic pathway of dolichol-linked oligosaccharides, the glycan precursors employed in protein asparagine (N)-glycosylation. The assembly of dolichol-linked oligosaccharides begins on the cytosolic side of the endoplasmic reticulum membrane and finishes in its lumen. The sequential addition of sugars to dolichol pyrophosphate produces dolichol-linked oligosaccharides containing fourteen sugars, including two GlcNAcs, nine mannoses and three glucoses. Once assembled, the oligosaccharide is transferred from the lipid to nascent proteins by oligosaccharyltransferases. Catalyzes the initial step of dolichol-linked oligosaccharide biosynthesis, transfering GlcNAc-1-P from cytosolic UDP-GlcNAc onto the carrier lipid dolichyl phosphate (P-dolichol), yielding GlcNAc-P-P-dolichol embedded in the cytoplasmic leaflet of the endoplasmic reticulum membrane. This chain is UDP-N-acetylglucosamine--dolichyl-phosphate N-acetylglucosaminephosphotransferase (alg7), found in Dictyostelium discoideum (Social amoeba).